We begin with the raw amino-acid sequence, 391 residues long: Anhydro-N-acetylmuramic acid kinase (391 aa).

9–16 (GTSYDAVE) is a binding site for ATP.

This sequence belongs to the anhydro-N-acetylmuramic acid kinase family.

The catalysed reaction is 1,6-anhydro-N-acetyl-beta-muramate + ATP + H2O = N-acetyl-D-muramate 6-phosphate + ADP + H(+). The protein operates within amino-sugar metabolism; 1,6-anhydro-N-acetylmuramate degradation. Its pathway is cell wall biogenesis; peptidoglycan recycling. In terms of biological role, catalyzes the specific phosphorylation of 1,6-anhydro-N-acetylmuramic acid (anhMurNAc) with the simultaneous cleavage of the 1,6-anhydro ring, generating MurNAc-6-P. Is required for the utilization of anhMurNAc either imported from the medium or derived from its own cell wall murein, and thus plays a role in cell wall recycling. The polypeptide is Anhydro-N-acetylmuramic acid kinase (Streptomyces coelicolor (strain ATCC BAA-471 / A3(2) / M145)).